The sequence spans 107 residues: Precursor of CEP14 (107 aa).

The N-terminal stretch at 1 to 21 is a signal peptide; that stretch reads MAVRLIPTIWLFIVFAVIVSA. The propeptide occupies 22–92; it reads LPSLVSSRKL…GKLRSRHLST (71 aa). Residue N39 is glycosylated (N-linked (GlcNAc...) asparagine). The interval 43-76 is disordered; the sequence is REEEKSHMPHVTKTSTLSALPKGKIPNSTPSKKG. P101 and P103 each carry hydroxyproline.

The protein belongs to the C-terminally encoded plant signaling peptide (CEP) family. As to quaternary structure, interacts with CEP receptors (e.g. CEPR1 and CEPR2). In terms of processing, the mature small signaling peptide is generated by proteolytic processing of the longer precursor.

It localises to the secreted. The protein resides in the extracellular space. It is found in the apoplast. Functionally, extracellular signaling peptide that may regulate primary root growth rate and systemic nitrogen (N)-demand signaling. The protein is Precursor of CEP14 of Arabidopsis thaliana (Mouse-ear cress).